Reading from the N-terminus, the 373-residue chain is tRNA pseudouridine synthase Pus10 (373 aa).

D197 serves as the catalytic Nucleophile. 2 residues coordinate substrate: Y265 and Y336.

This sequence belongs to the pseudouridine synthase Pus10 family.

The enzyme catalyses uridine(54) in tRNA = pseudouridine(54) in tRNA. It carries out the reaction uridine(55) in tRNA = pseudouridine(55) in tRNA. In terms of biological role, responsible for synthesis of pseudouridine from uracil-54 and uracil-55 in the psi GC loop of transfer RNAs. The protein is tRNA pseudouridine synthase Pus10 of Korarchaeum cryptofilum (strain OPF8).